The primary structure comprises 183 residues: Peptide deformylase (183 aa).

Positions 110 and 153 each coordinate Fe cation. Glu-154 is an active-site residue. His-157 provides a ligand contact to Fe cation.

The protein belongs to the polypeptide deformylase family. Requires Fe(2+) as cofactor.

The enzyme catalyses N-terminal N-formyl-L-methionyl-[peptide] + H2O = N-terminal L-methionyl-[peptide] + formate. Functionally, removes the formyl group from the N-terminal Met of newly synthesized proteins. Requires at least a dipeptide for an efficient rate of reaction. N-terminal L-methionine is a prerequisite for activity but the enzyme has broad specificity at other positions. This Listeria monocytogenes serotype 4a (strain HCC23) protein is Peptide deformylase.